We begin with the raw amino-acid sequence, 906 residues long: Cadherin-2 (906 aa).

An N-terminal signal peptide occupies residues 1–25 (MCRIAGALRTLLPLLAALLQASVEA). A propeptide spanning residues 26 to 159 (SGEIALCKTG…HSGHLQRQKR (134 aa)) is cleaved from the precursor. Phosphoserine; by FAM20C is present on residues S96 and S135. 5 Cadherin domains span residues 160–267 (DWVI…RPEF), 268–382 (LHQV…PPEF), 383–497 (TAMT…NPYF), 498–603 (APNP…DNAP), and 604–714 (QVLP…DVDR). Over 160-724 (DWVIPPINLP…IVGAGLGTGA (565 aa)) the chain is Extracellular. E170 is a Ca(2+) binding site. N-linked (GlcNAc...) asparagine glycosylation is present at N190. Residues D226, E228, D259, M260, N261, D262, and N263 each contribute to the Ca(2+) site. A glycan (N-linked (GlcNAc...) asparagine) is linked at N273. The Ca(2+) site is built by D293, D295, and N301. A glycan (N-linked (GlcNAc...) asparagine) is linked at N325. D353 contacts Ca(2+). N-linked (GlcNAc...) asparagine glycans are attached at residues N402, N572, N651, and N692. The chain crosses the membrane as a helical span at residues 725-745 (IIAILLCIIILLILVLMFVVW). At 746–906 (MKRRDKERQA…LADMYGGGDD (161 aa)) the chain is on the cytoplasmic side. Residues 863–880 (SGSTAGSLSSLNSSSSGG) are compositionally biased toward low complexity. The segment at 863 to 884 (SGSTAGSLSSLNSSSSGGEQDY) is disordered.

In terms of assembly, homodimer (via extracellular region). Can also form heterodimers with other cadherins (via extracellular region). Dimerization occurs in trans, i.e. with a cadherin chain from another cell. Interacts with CDCP1. Interacts with PCDH8; this complex may also include TAOK2. The interaction with PCDH8 may lead to internalization through TAOK2/p38 MAPK pathway. Identified in a complex containing FGFR4, NCAM1, CDH2, PLCG1, FRS2, SRC, SHC1, GAP43 and CTTN. May interact with OBSCN (via protein kinase domain 2). Interacts with FBXO45. In terms of processing, cleaved by MMP24. Ectodomain cleavage leads to the generation of a soluble 90 kDa N-terminal soluble fragment and a 45 kDa membrane-bound C-terminal fragment 1 (CTF1), which is further cleaved by gamma-secretase into a 35 kDa. Cleavage in neural stem cells by MMP24 affects CDH2-mediated anchorage of neural stem cells to ependymocytes in the adult subependymal zone, leading to modulate neural stem cell quiescence. Post-translationally, may be phosphorylated by OBSCN.

It is found in the cell membrane. Its subcellular location is the sarcolemma. The protein localises to the cell junction. The protein resides in the cell surface. It localises to the desmosome. It is found in the adherens junction. Calcium-dependent cell adhesion protein; preferentially mediates homotypic cell-cell adhesion by dimerization with a CDH2 chain from another cell. Cadherins may thus contribute to the sorting of heterogeneous cell types. Acts as a regulator of neural stem cells quiescence by mediating anchorage of neural stem cells to ependymocytes in the adult subependymal zone: upon cleavage by MMP24, CDH2-mediated anchorage is affected, leading to modulate neural stem cell quiescence. Plays a role in cell-to-cell junction formation between pancreatic beta cells and neural crest stem (NCS) cells, promoting the formation of processes by NCS cells. Required for proper neurite branching. Required for pre- and postsynaptic organization. CDH2 may be involved in neuronal recognition mechanism. In hippocampal neurons, may regulate dendritic spine density. This is Cadherin-2 (CDH2) from Homo sapiens (Human).